Reading from the N-terminus, the 247-residue chain is Uracil-DNA glycosylase (247 aa).

Aspartate 83 (proton acceptor) is an active-site residue.

This sequence belongs to the uracil-DNA glycosylase (UDG) superfamily. UNG family.

It localises to the cytoplasm. The catalysed reaction is Hydrolyzes single-stranded DNA or mismatched double-stranded DNA and polynucleotides, releasing free uracil.. Functionally, excises uracil residues from the DNA which can arise as a result of misincorporation of dUMP residues by DNA polymerase or due to deamination of cytosine. This chain is Uracil-DNA glycosylase, found in Deinococcus radiodurans (strain ATCC 13939 / DSM 20539 / JCM 16871 / CCUG 27074 / LMG 4051 / NBRC 15346 / NCIMB 9279 / VKM B-1422 / R1).